Consider the following 581-residue polypeptide: La-related protein 7 (581 aa).

M1 carries the N-acetylmethionine modification. A compositionally biased stretch (polar residues) spans 1 to 10 (METESGNQKN). Disordered stretches follow at residues 1–28 (METE…KKKR), 188–368 (NPPE…ERHK), and 410–440 (KSES…CPTQ). Residues 28–122 (RSRVKQVLAD…KPLGERPKDE (95 aa)) enclose the HTH La-type RNA-binding domain. The 79-residue stretch at 125–203 (RTVYVELLPK…PRKPGIFPKT (79 aa)) folds into the RRM domain. The span at 219-228 (KKKKKKKGRM) shows a compositional bias: basic residues. Residues 229-240 (KKEDNVQAKEEN) are compositionally biased toward basic and acidic residues. Residue K237 forms a Glycyl lysine isopeptide (Lys-Gly) (interchain with G-Cter in SUMO2) linkage. Phosphothreonine is present on T257. Residues S258, S261, S273, S298, S299, and S300 each carry the phosphoserine modification. Residues 316–335 (IQKDIIKEPSEASKENRDIE) are compositionally biased toward basic and acidic residues. Residue S337 is modified to Phosphoserine. T338 bears the Phosphothreonine mark. S351 is modified (phosphoserine). Basic residues predominate over residues 354–367 (KTKRKHKKKHKERH). Residue K410 forms a Glycyl lysine isopeptide (Lys-Gly) (interchain with G-Cter in SUMO2) linkage. The region spanning 449 to 562 (QFVSGVIVKI…TEKLITKAEK (114 aa)) is the xRRM domain.

Belongs to the LARP7 family. In terms of assembly, core component of the 7SK RNP complex, at least composed of 7SK RNA, LARP7, MEPCE, HEXIM1 (or HEXIM2) and P-TEFb (composed of CDK9 and CCNT1/cyclin-T1). Interacts with METTL16. Interacts with RBM7; upon genotoxic stress this interaction is enhanced, triggering the release of inactive P-TEFb complex from the core, yielding to P-TEFb complex activation. Associates with box C/D small nucleolar ribonucleoprotein (snoRNP) complexes.

Its subcellular location is the nucleus. The protein resides in the nucleoplasm. Functionally, RNA-binding protein that specifically binds distinct small nuclear RNA (snRNAs) and regulates their processing and function. Specifically binds the 7SK snRNA (7SK RNA) and acts as a core component of the 7SK ribonucleoprotein (RNP) complex, thereby acting as a negative regulator of transcription elongation by RNA polymerase II. The 7SK RNP complex sequesters the positive transcription elongation factor b (P-TEFb) in a large inactive 7SK RNP complex preventing RNA polymerase II phosphorylation and subsequent transcriptional elongation. The 7SK RNP complex also promotes snRNA gene transcription by RNA polymerase II via interaction with the little elongation complex (LEC). LARP7 specifically binds to the highly conserved 3'-terminal U-rich stretch of 7SK RNA; on stimulation, remains associated with 7SK RNA, whereas P-TEFb is released from the complex. LARP7 also acts as a regulator of mRNA splicing fidelity by promoting U6 snRNA processing. Specifically binds U6 snRNAs and associates with a subset of box C/D RNP complexes: promotes U6 snRNA 2'-O-methylation by facilitating U6 snRNA loading into box C/D RNP complexes. U6 snRNA 2'-O-methylation is required for mRNA splicing fidelity. Binds U6 snRNAs with a 5'-CAGGG-3' sequence motif. U6 snRNA processing is required for spermatogenesis. The chain is La-related protein 7 from Macaca fascicularis (Crab-eating macaque).